Here is a 260-residue protein sequence, read N- to C-terminus: UPF0246 protein BceJ2315_22780 (260 aa).

Belongs to the UPF0246 family.

The protein is UPF0246 protein BceJ2315_22780 of Burkholderia cenocepacia (strain ATCC BAA-245 / DSM 16553 / LMG 16656 / NCTC 13227 / J2315 / CF5610) (Burkholderia cepacia (strain J2315)).